Reading from the N-terminus, the 280-residue chain is Eukaryotic translation initiation factor 3 subunit F-1 (280 aa).

Residues 8-138 form the MPN domain; that stretch reads VRVHPVVLFQ…LRAYVCIQLG (131 aa).

It belongs to the eIF-3 subunit F family. As to quaternary structure, component of the eukaryotic translation initiation factor 3 (eIF-3) complex. The eIF-3 complex interacts with pix.

It localises to the cytoplasm. Component of the eukaryotic translation initiation factor 3 (eIF-3) complex, which is involved in protein synthesis of a specialized repertoire of mRNAs and, together with other initiation factors, stimulates binding of mRNA and methionyl-tRNAi to the 40S ribosome. The eIF-3 complex specifically targets and initiates translation of a subset of mRNAs involved in cell proliferation. The polypeptide is Eukaryotic translation initiation factor 3 subunit F-1 (Drosophila willistoni (Fruit fly)).